The sequence spans 276 residues: Small ribosomal subunit protein uS2 (276 aa).

Positions 226 to 276 (KKAREERQLAAAREAAGEPKSEDAPAEAAATEEAPATEAPAAEAQQENAAE) are disordered. A compositionally biased stretch (low complexity) spans 251–276 (AEAAATEEAPATEAPAAEAQQENAAE).

The protein belongs to the universal ribosomal protein uS2 family.

The sequence is that of Small ribosomal subunit protein uS2 from Corynebacterium efficiens (strain DSM 44549 / YS-314 / AJ 12310 / JCM 11189 / NBRC 100395).